The primary structure comprises 188 residues: UPF0301 protein XF_2228 (188 aa).

This sequence belongs to the UPF0301 (AlgH) family.

The protein is UPF0301 protein XF_2228 of Xylella fastidiosa (strain 9a5c).